The primary structure comprises 380 residues: Cytochrome b (380 aa).

4 helical membrane-spanning segments follow: residues 34 to 54 (FGSL…LLAM), 78 to 99 (WLIR…YLHI), 114 to 134 (WNTG…GYVL), and 179 to 199 (FFAL…IHLT). 2 residues coordinate heme b: histidine 84 and histidine 98. Residues histidine 183 and histidine 197 each coordinate heme b. Histidine 202 is an a ubiquinone binding site. Transmembrane regions (helical) follow at residues 227–247 (LKDI…ALFS), 289–309 (LGGV…PLLH), 321–341 (LSQL…WIGS), and 348–368 (FIII…VLFP).

This sequence belongs to the cytochrome b family. As to quaternary structure, the cytochrome bc1 complex contains 11 subunits: 3 respiratory subunits (MT-CYB, CYC1 and UQCRFS1), 2 core proteins (UQCRC1 and UQCRC2) and 6 low-molecular weight proteins (UQCRH/QCR6, UQCRB/QCR7, UQCRQ/QCR8, UQCR10/QCR9, UQCR11/QCR10 and a cleavage product of UQCRFS1). This cytochrome bc1 complex then forms a dimer. The cofactor is heme b.

Its subcellular location is the mitochondrion inner membrane. Functionally, component of the ubiquinol-cytochrome c reductase complex (complex III or cytochrome b-c1 complex) that is part of the mitochondrial respiratory chain. The b-c1 complex mediates electron transfer from ubiquinol to cytochrome c. Contributes to the generation of a proton gradient across the mitochondrial membrane that is then used for ATP synthesis. The polypeptide is Cytochrome b (MT-CYB) (Oceanodroma melania (Black storm-petrel)).